The primary structure comprises 333 residues: Gap junction alpha-4 protein (333 aa).

Residues 1–20 (MGDWGFLEKLLDQVQEHSTV) lie on the Cytoplasmic side of the membrane. The helical transmembrane segment at 21-40 (VGKIWLTVLFIFRILILGLA) threads the bilayer. Residues 41–76 (GESVWGDEQSDFECNTAQPGCTNVCYDQAFPISHIR) lie on the Extracellular side of the membrane. The chain crosses the membrane as a helical span at residues 77-99 (YWVLQFLFVSTPTLIYLGHVIYL). Over 100 to 148 (SRREERLRQKEGELRALPSKDLHVERALAAIEHQMAKISVAEDGRLRIR) the chain is Cytoplasmic. A helical transmembrane segment spans residues 149-171 (GALMGTYVVSVLCKSVLEAGFLY). Residues 172–208 (GQWRLYGWTMEPVFVCQRAPCPHIVDCYVSRPTEKTI) are Extracellular-facing. The chain crosses the membrane as a helical span at residues 209-231 (FIIFMLVVGVISLVLNLLELVHL). The Cytoplasmic portion of the chain corresponds to 232 to 333 (LCRCVSREIK…NSSASKKQYV (102 aa)). Residues 292–333 (ANLTTEERLTSSRPPPFVNTAPQGGRKSPSRPNSSASKKQYV) are disordered. The segment covering 321–333 (SRPNSSASKKQYV) has biased composition (polar residues).

The protein belongs to the connexin family. Alpha-type (group II) subfamily. As to quaternary structure, a connexon is composed of a hexamer of connexins. In terms of tissue distribution, highly expressed in lung.

Its subcellular location is the cell membrane. The protein localises to the cell junction. The protein resides in the gap junction. Its function is as follows. One gap junction consists of a cluster of closely packed pairs of transmembrane channels, the connexons, through which materials of low MW diffuse from one cell to a neighboring cell. The chain is Gap junction alpha-4 protein (Gja4) from Mus musculus (Mouse).